The following is a 45-amino-acid chain: Myotoxin-3 (45 aa).

3 disulfide bridges follow: Cys4/Cys36, Cys11/Cys30, and Cys18/Cys37.

As to quaternary structure, monomer. Expressed by the venom gland.

It is found in the secreted. Its function is as follows. Cationic peptide that possesses multiple functions. It acts as a cell-penetrating peptide (CPP), and as a potent voltage-gated potassium channel (Kv) inhibitor. It exhibits antimicrobial activities, hind limb paralysis, and severe muscle necrosis by a non-enzymatic mechanism. The polypeptide is Myotoxin-3 (Crotalus viridis viridis (Prairie rattlesnake)).